The sequence spans 550 residues: Coiled-coil domain-containing protein 60 (550 aa).

The segment at methionine 1 to proline 21 is disordered. Positions alanine 71–glutamine 98 form a coiled coil. Disordered stretches follow at residues lysine 219 to tyrosine 293 and alanine 336 to lysine 367. The span at arginine 235–serine 256 shows a compositional bias: low complexity. Positions alanine 336 to lysine 345 are enriched in polar residues.

The chain is Coiled-coil domain-containing protein 60 (CCDC60) from Homo sapiens (Human).